The following is a 219-amino-acid chain: Probable GTP-binding protein EngB (219 aa).

The EngB-type G domain maps to 24–207 (VQPEIAFAGR…HELIESWVRP (184 aa)). Residues 32–39 (GRSNAGKS), 59–63 (GRTQH), 81–84 (DLPG), 148–151 (TKCD), and 186–188 (FSA) each bind GTP. Mg(2+) contacts are provided by Ser-39 and Thr-61.

The protein belongs to the TRAFAC class TrmE-Era-EngA-EngB-Septin-like GTPase superfamily. EngB GTPase family. Mg(2+) serves as cofactor.

In terms of biological role, necessary for normal cell division and for the maintenance of normal septation. The sequence is that of Probable GTP-binding protein EngB from Burkholderia ambifaria (strain MC40-6).